A 311-amino-acid chain; its full sequence is MANPLYQKHIISINDLSRDDLNLVLATAAKLKANPQPELLKHKVIASCFFEASTRTRLSFETSMHRLGASVVGFSDSANTSLGKKGETLADTISVISTYVDAIVMRHPQEGAARLATEFSGNVPVLNAGDGSNQHPTQTLLDLFTIQETQGRLDNLHVAMVGDLKYGRTVHSLTQALAKFDGNRFYFIAPDALAMPQYILDMLDEKGIAWSLHSSIEEVIAEVDILYMTRVQKERLDPSEYANVKAQFVLRASDLHNAKANMKVLHPLPRVDEIATDVDKTPHAWYFQQAGNGIFARQALLALVLNRDLVL.

Arginine 55 and threonine 56 together coordinate carbamoyl phosphate. Lysine 85 serves as a coordination point for L-aspartate. Residues arginine 106, histidine 135, and glutamine 138 each contribute to the carbamoyl phosphate site. Residues arginine 168 and arginine 230 each contribute to the L-aspartate site. Carbamoyl phosphate contacts are provided by leucine 268 and proline 269.

It belongs to the aspartate/ornithine carbamoyltransferase superfamily. ATCase family. Heterododecamer (2C3:3R2) of six catalytic PyrB chains organized as two trimers (C3), and six regulatory PyrI chains organized as three dimers (R2).

The enzyme catalyses carbamoyl phosphate + L-aspartate = N-carbamoyl-L-aspartate + phosphate + H(+). Its pathway is pyrimidine metabolism; UMP biosynthesis via de novo pathway; (S)-dihydroorotate from bicarbonate: step 2/3. Catalyzes the condensation of carbamoyl phosphate and aspartate to form carbamoyl aspartate and inorganic phosphate, the committed step in the de novo pyrimidine nucleotide biosynthesis pathway. In Escherichia coli (strain 55989 / EAEC), this protein is Aspartate carbamoyltransferase catalytic subunit.